The sequence spans 1323 residues: uncharacterized protein (1323 aa).

Over residues 1–11 (MRELQGDDSSR) the composition is skewed to basic and acidic residues. 2 disordered regions span residues 1–57 (MREL…SSYY) and 79–112 (IHESSTALSAQSNTAQDGDQLASSSTISKDHSET). Residues 12 to 21 (KSPPSDSVVK) are compositionally biased toward low complexity. Ser-24 is subject to Phosphoserine. Over residues 27–40 (DYEHSLKSLQDERT) the composition is skewed to basic and acidic residues. Composition is skewed to polar residues over residues 42–57 (NYPNKQFNSENPSSYY) and 80–105 (HESSTALSAQSNTAQDGDQLASSSTI). 6 WD repeats span residues 271 to 314 (RHST…DRAI), 320 to 360 (GHTR…FPVN), 364 to 403 (DWHNGATQVKWNYKNPHILASSHGRLVRIWDDRYGSAPLH), 409 to 449 (ENIT…EEPE), 453 to 494 (TTDS…KEGP), and 502 to 551 (GHTD…LNSM). The region spanning 671–779 (EELSWIGQKY…SYLSGNLSVD (109 aa)) is the RWD domain. A compositionally biased stretch (polar residues) spans 879–888 (SNSVADSDST). The disordered stretch occupies residues 879 to 904 (SNSVADSDSTNYDDENSLNRGGTSES). The RING-type; degenerate zinc-finger motif lies at 1265–1309 (CTFCCLSIHGLCIVCGLCLHVMHEDCYKEWFSNGDSISQSCSSGC).

The protein belongs to the WD repeat WDR59 family.

May be involved in telomere capping. This is an uncharacterized protein from Schizosaccharomyces pombe (strain 972 / ATCC 24843) (Fission yeast).